Reading from the N-terminus, the 562-residue chain is Urocanate hydratase (562 aa).

Residues 52–53 (GG), Gln-130, 176–178 (GMG), Glu-196, Arg-201, 242–243 (NA), 263–267 (QTSAH), 273–274 (YL), and Tyr-322 contribute to the NAD(+) site. Cys-410 is an active-site residue. Residue Gly-492 participates in NAD(+) binding.

It belongs to the urocanase family. It depends on NAD(+) as a cofactor.

The protein resides in the cytoplasm. It catalyses the reaction 4-imidazolone-5-propanoate = trans-urocanate + H2O. It functions in the pathway amino-acid degradation; L-histidine degradation into L-glutamate; N-formimidoyl-L-glutamate from L-histidine: step 2/3. Catalyzes the conversion of urocanate to 4-imidazolone-5-propionate. The chain is Urocanate hydratase from Shewanella pealeana (strain ATCC 700345 / ANG-SQ1).